Reading from the N-terminus, the 213-residue chain is 3-dehydroquinate dehydratase (213 aa).

3-dehydroquinate is bound by residues 27–29 (EVR) and Arg-53. His-111 functions as the Proton donor/acceptor in the catalytic mechanism. The Schiff-base intermediate with substrate role is filled by Lys-138. The 3-dehydroquinate site is built by Arg-175 and Gln-197.

Belongs to the type-I 3-dehydroquinase family. In terms of assembly, homodimer.

It carries out the reaction 3-dehydroquinate = 3-dehydroshikimate + H2O. Its pathway is metabolic intermediate biosynthesis; chorismate biosynthesis; chorismate from D-erythrose 4-phosphate and phosphoenolpyruvate: step 3/7. In terms of biological role, involved in the third step of the chorismate pathway, which leads to the biosynthesis of aromatic amino acids. Catalyzes the cis-dehydration of 3-dehydroquinate (DHQ) and introduces the first double bond of the aromatic ring to yield 3-dehydroshikimate. This is 3-dehydroquinate dehydratase from Thermococcus gammatolerans (strain DSM 15229 / JCM 11827 / EJ3).